We begin with the raw amino-acid sequence, 180 residues long: Large ribosomal subunit protein uL5 (180 aa).

It belongs to the universal ribosomal protein uL5 family. As to quaternary structure, part of the 50S ribosomal subunit; part of the 5S rRNA/L5/L18/L25 subcomplex. Contacts the 5S rRNA and the P site tRNA. Forms a bridge to the 30S subunit in the 70S ribosome.

Functionally, this is one of the proteins that bind and probably mediate the attachment of the 5S RNA into the large ribosomal subunit, where it forms part of the central protuberance. In the 70S ribosome it contacts protein S13 of the 30S subunit (bridge B1b), connecting the 2 subunits; this bridge is implicated in subunit movement. Contacts the P site tRNA; the 5S rRNA and some of its associated proteins might help stabilize positioning of ribosome-bound tRNAs. The protein is Large ribosomal subunit protein uL5 of Limosilactobacillus reuteri (strain DSM 20016) (Lactobacillus reuteri).